The primary structure comprises 344 residues: MVTERQQDILNLIIDIFTKTHEPVGSKALQESINSSSATIRNDMAELEKQGLLEKAHTSSGRMPSVAGFQYYVKHSLDFHRLAENEVYEIVKAFDQEFFKLEDILQEAANLLTDLSGCTVVALDVEPSRQRLTAFDIVVLGQHTALAVFTLDESRTVTSQFLIPRNFLQEDLLKLKSIIQERFLGHTVLDIHYKIRTEIPQIIQRYFTTTDNVIDLFEHIFKEMFNENIVMAGKVNLLNFANLAAYQFFDQPQKVALEIREGLREDQMQNVRIADGQESCLADLAVISSKFLIPYRGVGILAIIGPVNLDYQQLINQINVVNRVLTMKLTDFYRYLSSNHYEVH.

Belongs to the HrcA family.

Its function is as follows. Negative regulator of class I heat shock genes (grpE-dnaK-dnaJ and groELS operons). Prevents heat-shock induction of these operons. In Streptococcus pneumoniae (strain P1031), this protein is Heat-inducible transcription repressor HrcA.